We begin with the raw amino-acid sequence, 339 residues long: RNA 3'-terminal phosphate cyclase (339 aa).

ATP contacts are provided by residues Gln103 and 283–287 (HLADQ). His308 serves as the catalytic Tele-AMP-histidine intermediate.

The protein belongs to the RNA 3'-terminal cyclase family. Type 1 subfamily.

Its subcellular location is the cytoplasm. It carries out the reaction a 3'-end 3'-phospho-ribonucleotide-RNA + ATP = a 3'-end 2',3'-cyclophospho-ribonucleotide-RNA + AMP + diphosphate. Functionally, catalyzes the conversion of 3'-phosphate to a 2',3'-cyclic phosphodiester at the end of RNA. The mechanism of action of the enzyme occurs in 3 steps: (A) adenylation of the enzyme by ATP; (B) transfer of adenylate to an RNA-N3'P to produce RNA-N3'PP5'A; (C) and attack of the adjacent 2'-hydroxyl on the 3'-phosphorus in the diester linkage to produce the cyclic end product. The biological role of this enzyme is unknown but it is likely to function in some aspects of cellular RNA processing. This Salmonella enteritidis PT4 (strain P125109) protein is RNA 3'-terminal phosphate cyclase.